Consider the following 292-residue polypeptide: 4-hydroxy-tetrahydrodipicolinate synthase (292 aa).

Residue Thr45 participates in pyruvate binding. Tyr133 serves as the catalytic Proton donor/acceptor. Residue Lys161 is the Schiff-base intermediate with substrate of the active site. Ile203 provides a ligand contact to pyruvate.

It belongs to the DapA family. As to quaternary structure, homotetramer; dimer of dimers.

The protein localises to the cytoplasm. The enzyme catalyses L-aspartate 4-semialdehyde + pyruvate = (2S,4S)-4-hydroxy-2,3,4,5-tetrahydrodipicolinate + H2O + H(+). It functions in the pathway amino-acid biosynthesis; L-lysine biosynthesis via DAP pathway; (S)-tetrahydrodipicolinate from L-aspartate: step 3/4. Functionally, catalyzes the condensation of (S)-aspartate-beta-semialdehyde [(S)-ASA] and pyruvate to 4-hydroxy-tetrahydrodipicolinate (HTPA). This Herminiimonas arsenicoxydans protein is 4-hydroxy-tetrahydrodipicolinate synthase.